The sequence spans 125 residues: Large ribosomal subunit protein bL12 (125 aa).

This sequence belongs to the bacterial ribosomal protein bL12 family. As to quaternary structure, homodimer. Part of the ribosomal stalk of the 50S ribosomal subunit. Forms a multimeric L10(L12)X complex, where L10 forms an elongated spine to which 2 to 4 L12 dimers bind in a sequential fashion. Binds GTP-bound translation factors.

Functionally, forms part of the ribosomal stalk which helps the ribosome interact with GTP-bound translation factors. Is thus essential for accurate translation. In Anaeromyxobacter dehalogenans (strain 2CP-1 / ATCC BAA-258), this protein is Large ribosomal subunit protein bL12.